The sequence spans 246 residues: Uridylate kinase (246 aa).

ATP is bound at residue 19 to 22 (KISG). G61 is a binding site for UMP. ATP-binding residues include G62 and R66. Residues D81 and 142–149 (TGNPFFTT) contribute to the UMP site. Residues T169, Q170, Y175, and D178 each coordinate ATP.

This sequence belongs to the UMP kinase family. Homohexamer.

It is found in the cytoplasm. It catalyses the reaction UMP + ATP = UDP + ADP. It functions in the pathway pyrimidine metabolism; CTP biosynthesis via de novo pathway; UDP from UMP (UMPK route): step 1/1. With respect to regulation, inhibited by UTP. Catalyzes the reversible phosphorylation of UMP to UDP. This Wolbachia sp. subsp. Brugia malayi (strain TRS) protein is Uridylate kinase.